The primary structure comprises 169 residues: 6,7-dimethyl-8-ribityllumazine synthase (169 aa).

5-amino-6-(D-ribitylamino)uracil-binding positions include Trp-27, 61 to 63 (SYE), and 90 to 92 (VLI). Residue 95–96 (ST) participates in (2S)-2-hydroxy-3-oxobutyl phosphate binding. His-98 acts as the Proton donor in catalysis. Phe-123 contributes to the 5-amino-6-(D-ribitylamino)uracil binding site. Arg-137 provides a ligand contact to (2S)-2-hydroxy-3-oxobutyl phosphate.

It belongs to the DMRL synthase family. In terms of assembly, homopentamer.

It is found in the mitochondrion intermembrane space. It catalyses the reaction (2S)-2-hydroxy-3-oxobutyl phosphate + 5-amino-6-(D-ribitylamino)uracil = 6,7-dimethyl-8-(1-D-ribityl)lumazine + phosphate + 2 H2O + H(+). Its pathway is cofactor biosynthesis; riboflavin biosynthesis; riboflavin from 2-hydroxy-3-oxobutyl phosphate and 5-amino-6-(D-ribitylamino)uracil: step 1/2. Catalyzes the formation of 6,7-dimethyl-8-ribityllumazine by condensation of 5-amino-6-(D-ribitylamino)uracil with 3,4-dihydroxy-2-butanone 4-phosphate. This is the penultimate step in the biosynthesis of riboflavin. The chain is 6,7-dimethyl-8-ribityllumazine synthase (RIB4) from Saccharomyces cerevisiae (strain ATCC 204508 / S288c) (Baker's yeast).